The primary structure comprises 466 residues: UDP-N-acetylmuramoylalanine--D-glutamate ligase (466 aa).

Glycine 124 to threonine 130 is an ATP binding site.

The protein belongs to the MurCDEF family.

It localises to the cytoplasm. The enzyme catalyses UDP-N-acetyl-alpha-D-muramoyl-L-alanine + D-glutamate + ATP = UDP-N-acetyl-alpha-D-muramoyl-L-alanyl-D-glutamate + ADP + phosphate + H(+). It functions in the pathway cell wall biogenesis; peptidoglycan biosynthesis. Cell wall formation. Catalyzes the addition of glutamate to the nucleotide precursor UDP-N-acetylmuramoyl-L-alanine (UMA). This chain is UDP-N-acetylmuramoylalanine--D-glutamate ligase, found in Acetivibrio thermocellus (strain ATCC 27405 / DSM 1237 / JCM 9322 / NBRC 103400 / NCIMB 10682 / NRRL B-4536 / VPI 7372) (Clostridium thermocellum).